A 211-amino-acid chain; its full sequence is ATP phosphoribosyltransferase (211 aa).

Belongs to the ATP phosphoribosyltransferase family. Short subfamily. As to quaternary structure, heteromultimer composed of HisG and HisZ subunits.

It is found in the cytoplasm. The catalysed reaction is 1-(5-phospho-beta-D-ribosyl)-ATP + diphosphate = 5-phospho-alpha-D-ribose 1-diphosphate + ATP. Its pathway is amino-acid biosynthesis; L-histidine biosynthesis; L-histidine from 5-phospho-alpha-D-ribose 1-diphosphate: step 1/9. In terms of biological role, catalyzes the condensation of ATP and 5-phosphoribose 1-diphosphate to form N'-(5'-phosphoribosyl)-ATP (PR-ATP). Has a crucial role in the pathway because the rate of histidine biosynthesis seems to be controlled primarily by regulation of HisG enzymatic activity. The chain is ATP phosphoribosyltransferase from Thermosynechococcus vestitus (strain NIES-2133 / IAM M-273 / BP-1).